Reading from the N-terminus, the 492-residue chain is MKKWWFNSMLSKGKGELEYRCWLSKSMESPGPIKNPSVSEELIRNDKNKNIHSSSDSDSSSYSKLAGVRDIHNFISDDTFFVKDSNRDSYSIYFDIENQILELDNAHSFLSELESSFYSFRNYSSRNNGSKSADPDSDRYMYDTKSSWNNHIHNCLDSYLHSQICIDSHVLSSSDNYSASYIYNFICSESESSNIQSSTNGSDLTISESSNESESSNESDVTQKYRHLWVQCENCYGLNYKKFLKSKMYLCEQCGYHLKMISSDRIDLLVDPGTWDPMDDDMVSIDPIEFDSEEEPYKNRIDSYQSKTGLTEAVQTGTGQLNGIPIAIGVMDFQFMGGSMGSVVGEKITRLIEYAANKFLPLLLVCASGGARMQEGSLSLMQMAKISSALYDYQSNKKLFYVSILTSPTTGGVTASFGMLGDIIIAEPNAYIAFAGKRVIEQTLNKTVPEGSQEAEYLFDKGLFDPIVPRNPLKGVLSELFLFHGRFPLNQN.

Positions 198–219 (STNGSDLTISESSNESESSNES) are disordered. Positions 228-492 (LWVQCENCYG…FHGRFPLNQN (265 aa)) constitute a CoA carboxyltransferase N-terminal domain. Zn(2+) is bound by residues C232, C235, C251, and C254. The C4-type zinc-finger motif lies at 232 to 254 (CENCYGLNYKKFLKSKMYLCEQC).

Belongs to the AccD/PCCB family. As to quaternary structure, acetyl-CoA carboxylase is a heterohexamer composed of biotin carboxyl carrier protein, biotin carboxylase and 2 subunits each of ACCase subunit alpha and ACCase plastid-coded subunit beta (accD). The cofactor is Zn(2+).

The protein resides in the plastid. It is found in the chloroplast stroma. The catalysed reaction is N(6)-carboxybiotinyl-L-lysyl-[protein] + acetyl-CoA = N(6)-biotinyl-L-lysyl-[protein] + malonyl-CoA. Its pathway is lipid metabolism; malonyl-CoA biosynthesis; malonyl-CoA from acetyl-CoA: step 1/1. Component of the acetyl coenzyme A carboxylase (ACC) complex. Biotin carboxylase (BC) catalyzes the carboxylation of biotin on its carrier protein (BCCP) and then the CO(2) group is transferred by the transcarboxylase to acetyl-CoA to form malonyl-CoA. This Citrus sinensis (Sweet orange) protein is Acetyl-coenzyme A carboxylase carboxyl transferase subunit beta, chloroplastic.